Here is a 236-residue protein sequence, read N- to C-terminus: Ribosomal RNA large subunit methyltransferase E (236 aa).

Positions 76, 78, 99, 115, and 140 each coordinate S-adenosyl-L-methionine. Lysine 180 serves as the catalytic Proton acceptor.

This sequence belongs to the class I-like SAM-binding methyltransferase superfamily. RNA methyltransferase RlmE family.

It localises to the cytoplasm. It carries out the reaction uridine(2552) in 23S rRNA + S-adenosyl-L-methionine = 2'-O-methyluridine(2552) in 23S rRNA + S-adenosyl-L-homocysteine + H(+). Specifically methylates the uridine in position 2552 of 23S rRNA at the 2'-O position of the ribose in the fully assembled 50S ribosomal subunit. The polypeptide is Ribosomal RNA large subunit methyltransferase E (Rhodopseudomonas palustris (strain HaA2)).